The primary structure comprises 578 residues: MLRVLLLGVLAPAGLGLPTPAQPQPRSSQCMEHDCFQLFRGPATFLAASQTCEGLGGHLMTVRSSVAADVISLLLSGDGGDGPRLWIGLQLRRGCSDPGQGGPLRGFQWVTGDNRTSYSRWARPHVGPAGPPCAPLCVAVSDAAAPAPGEPAWEEQRCAAEADGFLCEFHFAASCRPLLVDARAAAAAGVSVTYSTPFGARGADFQALPAGSSAAVAPFGVQLACAAPRGEAEARWGREAPGAWDCSVENGGCQRACSASAGAPRCLCPADTYLQADGRSCATFAEHSCHKLCEHFCIPNASVPGSYLCMCETGYQLAADQHRCEDVDDCIQVPSLCPQLCVNTRGAFECHCYPGYELVDNECVEPVDPCFGSKCEYQCQPVSQTDYRCICAEGFAPVPHDPHRCQMFCNQTACPADCDPNSPTSCQCPEGYILDDGFMCTDIDECENGECPEACRNLPGTYECICGPDSPLAGQVATDCGRIISDPDGDSDSGSGEPPVTPTPGVTPSPSPVGPVHSGVLIGISIASLSLVVALLALLCHLRKKQGAPRAELEYKCGAPAKEVVLQHVRTEQMPQKL.

The signal sequence occupies residues 1 to 16 (MLRVLLLGVLAPAGLG). Over 17-518 (LPTPAQPQPR…SPSPVGPVHS (502 aa)) the chain is Extracellular. One can recognise a C-type lectin domain in the interval 31-167 (MEHDCFQLFR…CAAEADGFLC (137 aa)). N-linked (GlcNAc...) asparagine glycosylation is present at N114. 19 cysteine pairs are disulfide-bonded: C137–C158, C246–C257, C253–C266, C268–C281, C289–C297, C293–C309, C311–C324, C330–C341, C337–C350, C352–C363, C370–C379, C375–C389, C391–C405, C409–C414, C418–C426, C428–C440, C446–C455, C451–C464, and C466–C480. 2 EGF-like domains span residues 242-282 (GAWD…RSCA) and 285-325 (AEHS…HRCE). An N-linked (GlcNAc...) asparagine glycan is attached at N300. The region spanning 326 to 364 (DVDDCIQVPSLCPQLCVNTRGAFECHCYPGYELVDNECV) is the EGF-like 3; calcium-binding domain. Position 343 is a (3R)-3-hydroxyasparagine (N343). EGF-like domains lie at 366-406 (PVDP…HRCQ) and 405-441 (CQMF…FMCT). The N-linked (GlcNAc...) asparagine glycan is linked to N410. An EGF-like 6; calcium-binding domain is found at 442–481 (DIDECENGECPEACRNLPGTYECICGPDSPLAGQVATDCG). The segment at 483 to 512 (IISDPDGDSDSGSGEPPVTPTPGVTPSPSP) is disordered. Residues S493 and S495 are each glycosylated (O-linked (Xyl...) (chondroitin sulfate) serine). Over residues 499–512 (PVTPTPGVTPSPSP) the composition is skewed to pro residues. The helical transmembrane segment at 519–539 (GVLIGISIASLSLVVALLALL) threads the bilayer. At 540–578 (CHLRKKQGAPRAELEYKCGAPAKEVVLQHVRTEQMPQKL) the chain is on the cytoplasmic side.

Interacts with ITGAL, ITGAM and ITGB2. Interacts with thrombin/F2; this interaction switches the specificity of thrombin from a procoagulant to an anticoagulant and antifibrinolytic protease. Interacts with ANGP1 and ANGP2; these interactions significantly inhibit the generation of activated PC and TAFIa/CPB2 by the thrombin/thrombomodulin complex. Interacts with PF4; this interaction enhances generation of activated protein C. Interacts with HMGB1; this interaction inhibits HMGB1 inflammatory activity. In terms of processing, N-glycosylated. The iron and 2-oxoglutarate dependent 3-hydroxylation of aspartate and asparagine is (R) stereospecific within EGF domains. As to expression, expressed in lung, liver, spleen, kidney, pancreas and lymph node. Low expression in heart, cerebrum, urinary bladder and uterus.

It localises to the membrane. Its function is as follows. Endothelial cell receptor that plays a critical role in regulating several physiological processes including hemostasis, coagulation, fibrinolysis, inflammation, and angiogenesis. Acts as a cofactor for thrombin activation of protein C/PROC on the surface of vascular endothelial cells leading to initiation of the activated protein C anticoagulant pathway. Also accelerates the activation of the plasma carboxypeptidase B2/CPB2, which catalyzes removal of C-terminal basic amino acids from its substrates including kinins or anaphylatoxins leading to fibrinolysis inhibition. Plays critical protective roles in changing the cleavage specificity of protease-activated receptor 1/PAR1, inhibiting endothelial cell permeability and inflammation. Suppresses inflammation distinctly from its anticoagulant cofactor activity by sequestering HMGB1 thereby preventing it from engaging cellular receptors such as RAGE and contributing to the inflammatory response. The chain is Thrombomodulin (THBD) from Canis lupus familiaris (Dog).